An 856-amino-acid polypeptide reads, in one-letter code: Villin-like protein (856 aa).

Gelsolin-like repeat units lie at residues 22-74 (RKMV…EAQG), 146-186 (VSAT…SEKA), 263-307 (LVVL…QERK), 401-450 (LHRQ…DEIE), 521-561 (TRTM…DQRE), and 624-665 (LVLA…WKEA). The interval 762–796 (SQDSSENDLVRSPKSAGSRTSSSVSSTSATINGGL) is disordered. The span at 776–791 (SAGSRTSSSVSSTSAT) shows a compositional bias: low complexity. The HP domain occupies 790 to 856 (ATINGGLRRE…RQEKKQLGFF (67 aa)).

It belongs to the villin/gelsolin family. In terms of tissue distribution, ubiquitously expressed in 16 tissues examined.

Its function is as follows. Possible tumor suppressor. This Homo sapiens (Human) protein is Villin-like protein (VILL).